A 314-amino-acid chain; its full sequence is 4-hydroxy-3-methylbut-2-enyl diphosphate reductase (314 aa).

Cysteine 12 is a binding site for [4Fe-4S] cluster. Positions 43 and 81 each coordinate (2E)-4-hydroxy-3-methylbut-2-enyl diphosphate. The dimethylallyl diphosphate site is built by histidine 43 and histidine 81. Residues histidine 43 and histidine 81 each contribute to the isopentenyl diphosphate site. Residue cysteine 103 coordinates [4Fe-4S] cluster. Position 131 (histidine 131) interacts with (2E)-4-hydroxy-3-methylbut-2-enyl diphosphate. Histidine 131 contributes to the dimethylallyl diphosphate binding site. Histidine 131 serves as a coordination point for isopentenyl diphosphate. The active-site Proton donor is glutamate 133. Threonine 170 serves as a coordination point for (2E)-4-hydroxy-3-methylbut-2-enyl diphosphate. Cysteine 198 lines the [4Fe-4S] cluster pocket. Serine 226, asparagine 228, and serine 271 together coordinate (2E)-4-hydroxy-3-methylbut-2-enyl diphosphate. Residues serine 226, asparagine 228, and serine 271 each coordinate dimethylallyl diphosphate. Isopentenyl diphosphate contacts are provided by serine 226, asparagine 228, and serine 271.

The protein belongs to the IspH family. Requires [4Fe-4S] cluster as cofactor.

The enzyme catalyses isopentenyl diphosphate + 2 oxidized [2Fe-2S]-[ferredoxin] + H2O = (2E)-4-hydroxy-3-methylbut-2-enyl diphosphate + 2 reduced [2Fe-2S]-[ferredoxin] + 2 H(+). It carries out the reaction dimethylallyl diphosphate + 2 oxidized [2Fe-2S]-[ferredoxin] + H2O = (2E)-4-hydroxy-3-methylbut-2-enyl diphosphate + 2 reduced [2Fe-2S]-[ferredoxin] + 2 H(+). It functions in the pathway isoprenoid biosynthesis; dimethylallyl diphosphate biosynthesis; dimethylallyl diphosphate from (2E)-4-hydroxy-3-methylbutenyl diphosphate: step 1/1. The protein operates within isoprenoid biosynthesis; isopentenyl diphosphate biosynthesis via DXP pathway; isopentenyl diphosphate from 1-deoxy-D-xylulose 5-phosphate: step 6/6. In terms of biological role, catalyzes the conversion of 1-hydroxy-2-methyl-2-(E)-butenyl 4-diphosphate (HMBPP) into a mixture of isopentenyl diphosphate (IPP) and dimethylallyl diphosphate (DMAPP). Acts in the terminal step of the DOXP/MEP pathway for isoprenoid precursor biosynthesis. The sequence is that of 4-hydroxy-3-methylbut-2-enyl diphosphate reductase from Bacillus subtilis (strain 168).